We begin with the raw amino-acid sequence, 205 residues long: Probable GTP-binding protein EngB (205 aa).

The region spanning 27 to 201 is the EngB-type G domain; it reads EGMEIAFAGR…AAKLDSWFSS (175 aa). GTP-binding positions include 35–42, 62–66, 80–83, 147–150, and 180–182; these read GRSNAGKS, GRTQL, DLPG, TKAD, and FSA. Positions 42 and 64 each coordinate Mg(2+).

It belongs to the TRAFAC class TrmE-Era-EngA-EngB-Septin-like GTPase superfamily. EngB GTPase family. Mg(2+) serves as cofactor.

Necessary for normal cell division and for the maintenance of normal septation. This is Probable GTP-binding protein EngB from Mannheimia succiniciproducens (strain KCTC 0769BP / MBEL55E).